Here is a 361-residue protein sequence, read N- to C-terminus: DNA replication and repair protein RecF (361 aa).

30–37 (GDNAQGKT) contacts ATP.

Belongs to the RecF family.

The protein localises to the cytoplasm. The RecF protein is involved in DNA metabolism; it is required for DNA replication and normal SOS inducibility. RecF binds preferentially to single-stranded, linear DNA. It also seems to bind ATP. The sequence is that of DNA replication and repair protein RecF from Clostridium perfringens (strain ATCC 13124 / DSM 756 / JCM 1290 / NCIMB 6125 / NCTC 8237 / Type A).